The sequence spans 139 residues: Spermatogenesis-associated protein 33 (139 aa).

Residues 1–67 (MVTHAAGART…TAKHPPPAAS (67 aa)) are interaction with ATG16L1. The tract at residues 1 to 83 (MVTHAAGART…VKQKSSRKKV (83 aa)) is disordered. The span at 25 to 50 (KSKEKLMEKHSQEARQADRESEKPVD) shows a compositional bias: basic and acidic residues. The segment at 68–139 (LEEKPDVKQK…ADAYNSHLKE (72 aa)) is interaction with VDAC2. A PQIIIT motif is present at residues 86 to 91 (PQIIIT). Residue serine 94 is modified to Phosphoserine. The segment covering 97–109 (TLVSCSSSGSDQQ) has biased composition (polar residues). The segment at 97 to 139 (TLVSCSSSGSDQQRTIREPEDWGPYRRHRNPSTADAYNSHLKE) is disordered. Residues 110-120 (RTIREPEDWGP) are compositionally biased toward basic and acidic residues.

Interacts (via PQIIIT motif) with PPP3R1, PPP3R2, PPP3CA, PPP3CB and PPP3CC. Interacts with VDAC2. Interacts with ATG16L1 (via WD repeats).

The protein localises to the cytoplasm. It is found in the cytosol. It localises to the nucleus. The protein resides in the mitochondrion. Its function is as follows. Plays an important role in sperm motility and male fertility. Required for sperm midpiece flexibility and for the localization of sperm calcineurin to the mitochondria. Promotes mitophagy as well as acts as an autophagy mediator in male germline cells. Links damaged mitochondria to autophagosomes via its binding to the outer mitochondrial membrane protein VDAC2, as well as to key autophagy machinery component ATG16L1. The chain is Spermatogenesis-associated protein 33 (SPATA33) from Homo sapiens (Human).